Consider the following 107-residue polypeptide: Pre-mRNA-splicing factor RDS3 (107 aa).

It belongs to the PHF5 family. Component of the spliceosome where it interacts with CUS1, HSH49, HSH155, IST3 and RSE1. Also interacts with YRA1.

The protein localises to the nucleus. Its function is as follows. Required for pre-mRNA splicing. Involved in regulation of drug sensitivity and may play a role in multidrug resistance. The polypeptide is Pre-mRNA-splicing factor RDS3 (RDS3) (Saccharomyces cerevisiae (strain ATCC 204508 / S288c) (Baker's yeast)).